A 1034-amino-acid polypeptide reads, in one-letter code: Beta-galactosidase (1034 aa).

Residues Asn108 and Asp207 each coordinate substrate. Asp207 lines the Na(+) pocket. Positions 423, 425, and 468 each coordinate Mg(2+). Residues Glu468 and 544–547 (EYAH) each bind substrate. Catalysis depends on Glu468, which acts as the Proton donor. The active-site Nucleophile is the Glu544. Position 604 (Asn604) interacts with Mg(2+). 2 residues coordinate Na(+): Phe608 and Asn611. Residues Asn611 and Trp1010 each coordinate substrate.

It belongs to the glycosyl hydrolase 2 family. As to quaternary structure, homotetramer. It depends on Mg(2+) as a cofactor. Na(+) is required as a cofactor.

It carries out the reaction Hydrolysis of terminal non-reducing beta-D-galactose residues in beta-D-galactosides.. The protein is Beta-galactosidase of Klebsiella pneumoniae.